Here is a 215-residue protein sequence, read N- to C-terminus: Ribose-5-phosphate isomerase A (215 aa).

Substrate-binding positions include 26-29 (TGST), 79-82 (DGAD), and 92-95 (KGGG). Glutamate 101 acts as the Proton acceptor in catalysis. Lysine 119 serves as a coordination point for substrate.

This sequence belongs to the ribose 5-phosphate isomerase family. As to quaternary structure, homodimer.

The catalysed reaction is aldehydo-D-ribose 5-phosphate = D-ribulose 5-phosphate. The protein operates within carbohydrate degradation; pentose phosphate pathway; D-ribose 5-phosphate from D-ribulose 5-phosphate (non-oxidative stage): step 1/1. Functionally, catalyzes the reversible conversion of ribose-5-phosphate to ribulose 5-phosphate. The polypeptide is Ribose-5-phosphate isomerase A (Xanthomonas campestris pv. campestris (strain 8004)).